Consider the following 35-residue polypeptide: Photosystem II reaction center protein T (35 aa).

A helical membrane pass occupies residues 3–23; the sequence is ALVYTFLLVSTLGIIFFAIFF.

It belongs to the PsbT family. In terms of assembly, PSII is composed of 1 copy each of membrane proteins PsbA, PsbB, PsbC, PsbD, PsbE, PsbF, PsbH, PsbI, PsbJ, PsbK, PsbL, PsbM, PsbT, PsbY, PsbZ, Psb30/Ycf12, at least 3 peripheral proteins of the oxygen-evolving complex and a large number of cofactors. It forms dimeric complexes.

It localises to the plastid. The protein resides in the chloroplast thylakoid membrane. In terms of biological role, found at the monomer-monomer interface of the photosystem II (PS II) dimer, plays a role in assembly and dimerization of PSII. PSII is a light-driven water plastoquinone oxidoreductase, using light energy to abstract electrons from H(2)O, generating a proton gradient subsequently used for ATP formation. This Cabomba caroliniana (Carolina fanwort) protein is Photosystem II reaction center protein T.